The chain runs to 94 residues: Protein S100-A1 (94 aa).

Gly-2 is subject to Blocked amino end (Gly). EF-hand domains are found at residues 13-48 (INVF…FLDA) and 50-85 (KDAD…LTVA). Positions 28, 33, 63, 65, 67, 69, and 74 each coordinate Ca(2+). Cys-86 carries the S-nitrosocysteine modification.

The protein belongs to the S-100 family. Dimer of either two alpha chains, or two beta chains, or one alpha and one beta chain. Also forms heterodimers with S100P. Interacts with AGER. Interacts with CAPZA1. Interacts with FKBP4. Interacts with RYR1 and RYR2. Interacts with CACYBP in a calcium-dependent manner. Interacts with PPP5C (via TPR repeats); the interaction is calcium-dependent and modulates PPP5C activity. Interacts with ATP2A2 and PLN in a Ca(2+)-dependent manner. Interacts with mitochondrial F1-ATPase subunits ATP5F1A and ATP5F1B; these interactions increase F1-ATPase activity. Glutathionylated; glutathionylation increases affinity to calcium about 10-fold. As to expression, although predominant among the water-soluble brain proteins, S100 is also found in a variety of other tissues.

The protein localises to the cytoplasm. Its subcellular location is the sarcoplasmic reticulum. It is found in the mitochondrion. Functionally, small calcium binding protein that plays important roles in several biological processes such as Ca(2+) homeostasis, chondrocyte biology and cardiomyocyte regulation. In response to an increase in intracellular Ca(2+) levels, binds calcium which triggers conformational changes. These changes allow interactions with specific target proteins and modulate their activity. Regulates a network in cardiomyocytes controlling sarcoplasmic reticulum Ca(2+) cycling and mitochondrial function through interaction with the ryanodine receptors RYR1 and RYR2, sarcoplasmic reticulum Ca(2+)-ATPase/ATP2A2 and mitochondrial F1-ATPase. Facilitates diastolic Ca(2+) dissociation and myofilament mechanics in order to improve relaxation during diastole. The sequence is that of Protein S100-A1 (S100A1) from Bos taurus (Bovine).